Reading from the N-terminus, the 353-residue chain is Photosystem II D2 protein (353 aa).

Position 2 is an N-acetylthreonine (Thr2). Thr2 is subject to Phosphothreonine. A helical membrane pass occupies residues Cys41–Thr61. A chlorophyll a-binding site is contributed by His118. The chain crosses the membrane as a helical span at residues Gly125 to Pro141. Pheophytin a contacts are provided by Gln130 and Asn143. The chain crosses the membrane as a helical span at residues Val153–Ser166. His198 contributes to the chlorophyll a binding site. A helical transmembrane segment spans residues Ala208–Asp228. A plastoquinone contacts are provided by His215 and Phe262. His215 is a Fe cation binding site. Residue His269 coordinates Fe cation. The helical transmembrane segment at Gly279 to Arg295 threads the bilayer.

This sequence belongs to the reaction center PufL/M/PsbA/D family. As to quaternary structure, PSII is composed of 1 copy each of membrane proteins PsbA, PsbB, PsbC, PsbD, PsbE, PsbF, PsbH, PsbI, PsbJ, PsbK, PsbL, PsbM, PsbT, PsbX, PsbY, PsbZ, Psb30/Ycf12, at least 3 peripheral proteins of the oxygen-evolving complex and a large number of cofactors. It forms dimeric complexes. It depends on The D1/D2 heterodimer binds P680, chlorophylls that are the primary electron donor of PSII, and subsequent electron acceptors. It shares a non-heme iron and each subunit binds pheophytin, quinone, additional chlorophylls, carotenoids and lipids. There is also a Cl(-1) ion associated with D1 and D2, which is required for oxygen evolution. The PSII complex binds additional chlorophylls, carotenoids and specific lipids. as a cofactor.

It is found in the plastid. Its subcellular location is the chloroplast thylakoid membrane. The enzyme catalyses 2 a plastoquinone + 4 hnu + 2 H2O = 2 a plastoquinol + O2. Photosystem II (PSII) is a light-driven water:plastoquinone oxidoreductase that uses light energy to abstract electrons from H(2)O, generating O(2) and a proton gradient subsequently used for ATP formation. It consists of a core antenna complex that captures photons, and an electron transfer chain that converts photonic excitation into a charge separation. The D1/D2 (PsbA/PsbD) reaction center heterodimer binds P680, the primary electron donor of PSII as well as several subsequent electron acceptors. D2 is needed for assembly of a stable PSII complex. This Lolium perenne (Perennial ryegrass) protein is Photosystem II D2 protein.